The primary structure comprises 367 residues: Glycolate oxidase 3 (367 aa).

The region spanning 1–360 is the FMN hydroxy acid dehydrogenase domain; that stretch reads MELITNVSEY…TRNHVITDSD (360 aa). Position 25 (tyrosine 25) interacts with glyoxylate. FMN is bound by residues 78-80, serine 107, 128-130, and threonine 156; these read PSA and QLY. Residue tyrosine 130 coordinates glyoxylate. Arginine 165 is a glyoxylate binding site. FMN is bound by residues lysine 231 and serine 253. Glyoxylate is bound by residues histidine 255 and arginine 258. The Proton acceptor role is filled by histidine 255. Residues 286–290 and 309–310 each bind FMN; these read DGGVR and GR. The Microbody targeting signal motif lies at 365–367; it reads SRL.

The protein belongs to the FMN-dependent alpha-hydroxy acid dehydrogenase family. In terms of assembly, homotetramer. FMN serves as cofactor.

It is found in the peroxisome. It catalyses the reaction glycolate + O2 = glyoxylate + H2O2. It functions in the pathway photosynthesis; photorespiration; glycine from 2-phosphoglycolate: step 2/3. Catalyzes the oxidation of glycolate to glyoxylate, with a reduction of O2 to H2O2. Is a key enzyme in photorespiration in green plants. This chain is Glycolate oxidase 3 (GLO3), found in Oryza sativa subsp. indica (Rice).